The following is a 198-amino-acid chain: tRNA (pseudouridine(54)-N(1))-methyltransferase (198 aa).

S-adenosyl-L-methionine contacts are provided by residues Leu-130, Gly-153, 176–181 (LSPLEL), and Cys-186.

The protein belongs to the methyltransferase superfamily. TrmY family. In terms of assembly, homodimer.

It localises to the cytoplasm. It catalyses the reaction pseudouridine(54) in tRNA + S-adenosyl-L-methionine = N(1)-methylpseudouridine(54) in tRNA + S-adenosyl-L-homocysteine + H(+). Functionally, specifically catalyzes the N1-methylation of pseudouridine at position 54 (Psi54) in tRNAs. This Methanococcus maripaludis (strain C6 / ATCC BAA-1332) protein is tRNA (pseudouridine(54)-N(1))-methyltransferase.